Reading from the N-terminus, the 426-residue chain is Glutamate-1-semialdehyde 2,1-aminomutase (426 aa).

At Lys-265 the chain carries N6-(pyridoxal phosphate)lysine.

It belongs to the class-III pyridoxal-phosphate-dependent aminotransferase family. HemL subfamily. As to quaternary structure, homodimer. Pyridoxal 5'-phosphate serves as cofactor.

It localises to the cytoplasm. The catalysed reaction is (S)-4-amino-5-oxopentanoate = 5-aminolevulinate. It functions in the pathway porphyrin-containing compound metabolism; protoporphyrin-IX biosynthesis; 5-aminolevulinate from L-glutamyl-tRNA(Glu): step 2/2. This chain is Glutamate-1-semialdehyde 2,1-aminomutase, found in Yersinia enterocolitica serotype O:8 / biotype 1B (strain NCTC 13174 / 8081).